Consider the following 133-residue polypeptide: Ribosome-binding factor A (133 aa).

The protein belongs to the RbfA family. In terms of assembly, monomer. Binds 30S ribosomal subunits, but not 50S ribosomal subunits or 70S ribosomes.

It is found in the cytoplasm. One of several proteins that assist in the late maturation steps of the functional core of the 30S ribosomal subunit. Associates with free 30S ribosomal subunits (but not with 30S subunits that are part of 70S ribosomes or polysomes). Required for efficient processing of 16S rRNA. May interact with the 5'-terminal helix region of 16S rRNA. The protein is Ribosome-binding factor A of Bordetella pertussis (strain Tohama I / ATCC BAA-589 / NCTC 13251).